The primary structure comprises 212 residues: MTTQKIVPTKSTDGSKLFRHQAKFVAGAMNINQIPNFSLPEIAFVGKSNVGKSSLINTICNNKNLAKVSNTAGRTRQINFFNLADKLIIVDLPGYGFANVPISVKEQWGVLISYYLRNSYNLRLVNLLIDSRRGIKENDKKVADLLLANKREFQIIFTKSDKVTDHKNLHDEAHNFLATLNYSCNVMYVSNRSKEGARELKASLAKCIKPQK.

Residues 38–210 (SLPEIAFVGK…KASLAKCIKP (173 aa)) enclose the EngB-type G domain. GTP is bound by residues 46–53 (GKSNVGKS), 73–77 (GRTRQ), 91–94 (DLPG), 158–161 (TKSD), and 189–191 (VSN). 2 residues coordinate Mg(2+): S53 and T75.

It belongs to the TRAFAC class TrmE-Era-EngA-EngB-Septin-like GTPase superfamily. EngB GTPase family. The cofactor is Mg(2+).

Necessary for normal cell division and for the maintenance of normal septation. This chain is Probable GTP-binding protein EngB, found in Rickettsia peacockii (strain Rustic).